Consider the following 545-residue polypeptide: Chaperonin GroEL (545 aa).

ATP is bound by residues Thr-29–Pro-32, Asp-86–Thr-90, Gly-413, Asn-476–Ala-478, and Asp-492.

This sequence belongs to the chaperonin (HSP60) family. Forms a cylinder of 14 subunits composed of two heptameric rings stacked back-to-back. Interacts with the co-chaperonin GroES.

It localises to the cytoplasm. The catalysed reaction is ATP + H2O + a folded polypeptide = ADP + phosphate + an unfolded polypeptide.. Its function is as follows. Together with its co-chaperonin GroES, plays an essential role in assisting protein folding. The GroEL-GroES system forms a nano-cage that allows encapsulation of the non-native substrate proteins and provides a physical environment optimized to promote and accelerate protein folding. The sequence is that of Chaperonin GroEL from Shouchella clausii (strain KSM-K16) (Alkalihalobacillus clausii).